A 285-amino-acid chain; its full sequence is Probable endonuclease 4 (285 aa).

9 residues coordinate Zn(2+): histidine 69, histidine 109, glutamate 145, aspartate 179, histidine 182, histidine 216, aspartate 229, histidine 231, and glutamate 261.

Belongs to the AP endonuclease 2 family. Requires Zn(2+) as cofactor.

The catalysed reaction is Endonucleolytic cleavage to 5'-phosphooligonucleotide end-products.. Endonuclease IV plays a role in DNA repair. It cleaves phosphodiester bonds at apurinic or apyrimidinic (AP) sites, generating a 3'-hydroxyl group and a 5'-terminal sugar phosphate. The polypeptide is Probable endonuclease 4 (Enterobacter sp. (strain 638)).